The chain runs to 120 residues: Ribosomal protein eL22-like 1 (120 aa).

The protein belongs to the eukaryotic ribosomal protein eL22 family.

The sequence is that of Ribosomal protein eL22-like 1 (rpl22l1) from Xenopus tropicalis (Western clawed frog).